A 283-amino-acid polypeptide reads, in one-letter code: Pantothenate synthetase (283 aa).

30-37 contributes to the ATP binding site; the sequence is MGYLHEGH. The Proton donor role is filled by His-37. Residue Gln-61 coordinates (R)-pantoate. Gln-61 contributes to the beta-alanine binding site. 147–150 lines the ATP pocket; sequence GLKD. (R)-pantoate is bound at residue Gln-153. ATP-binding positions include Val-176 and 184-187; that span reads KSSR.

Belongs to the pantothenate synthetase family. As to quaternary structure, homodimer.

Its subcellular location is the cytoplasm. The catalysed reaction is (R)-pantoate + beta-alanine + ATP = (R)-pantothenate + AMP + diphosphate + H(+). Its pathway is cofactor biosynthesis; (R)-pantothenate biosynthesis; (R)-pantothenate from (R)-pantoate and beta-alanine: step 1/1. Catalyzes the condensation of pantoate with beta-alanine in an ATP-dependent reaction via a pantoyl-adenylate intermediate. This chain is Pantothenate synthetase, found in Halalkalibacterium halodurans (strain ATCC BAA-125 / DSM 18197 / FERM 7344 / JCM 9153 / C-125) (Bacillus halodurans).